A 96-amino-acid chain; its full sequence is MASEKYYIYVLYCADNSFYCGFTNNVKRRFHTHQTYQGAKYTRVKKRHPLKLIYSEEFESKHDALSAEYYFKHQTRRQKEKFLLDHGVDLLKLRRN.

The GIY-YIG domain maps to 4-81; that stretch reads EKYYIYVLYC…KHQTRRQKEK (78 aa).

This sequence belongs to the UPF0213 family.

In Limosilactobacillus reuteri (strain DSM 20016) (Lactobacillus reuteri), this protein is UPF0213 protein Lreu_0682.